The sequence spans 203 residues: MHAGVRGKKERAKFVWPLLGAGLLLAAEGVAWASGGGGEHGGGHLNWSDFLARTLVFVITFSILFKLLKKPIAGFFSSRKAEIQRLLSELELKQKEAEQNHAECKAKLAALEVETKKIVDELIAEGEVERQKIIEAAEKQADYLRQQADVAIQQEIKAAREKLKLEISELSVAAAEEILRKNMKAKDQDRLVRDFMKRVVEAK.

A helical transmembrane segment spans residues 14 to 34 (FVWPLLGAGLLLAAEGVAWAS).

Belongs to the ATPase B chain family. In terms of assembly, F-type ATPases have 2 components, F(1) - the catalytic core - and F(0) - the membrane proton channel. F(1) has five subunits: alpha(3), beta(3), gamma(1), delta(1), epsilon(1). F(0) has three main subunits: a(1), b(2) and c(10-14). The alpha and beta chains form an alternating ring which encloses part of the gamma chain. F(1) is attached to F(0) by a central stalk formed by the gamma and epsilon chains, while a peripheral stalk is formed by the delta and b chains.

The protein resides in the cell inner membrane. F(1)F(0) ATP synthase produces ATP from ADP in the presence of a proton or sodium gradient. F-type ATPases consist of two structural domains, F(1) containing the extramembraneous catalytic core and F(0) containing the membrane proton channel, linked together by a central stalk and a peripheral stalk. During catalysis, ATP synthesis in the catalytic domain of F(1) is coupled via a rotary mechanism of the central stalk subunits to proton translocation. Its function is as follows. Component of the F(0) channel, it forms part of the peripheral stalk, linking F(1) to F(0). The chain is ATP synthase subunit b from Syntrophobacter fumaroxidans (strain DSM 10017 / MPOB).